The chain runs to 449 residues: MFS-type transporter hasB (449 aa).

The next 12 helical transmembrane spans lie at 44-64, 80-100, 112-132, 135-155, 168-188, 195-215, 255-275, 296-316, 322-342, 346-366, 387-407, and 415-435; these read VAGS…CGIF, ALAW…PAVG, LPPF…CTKY, VMLA…LPAM, LAVG…PCML, VGFA…LFIA, LPWG…FAPL, AIAN…SDII, MCIV…PLEF, LAGI…FVSL, GGFC…EGAI, and FTGL…CTGT.

It belongs to the major facilitator superfamily. Monocarboxylate porter (TC 2.A.1.13) family.

It localises to the membrane. Functionally, MFS-type transporter; part of the gene cluster that mediates the biosynthesis of hexadehydro-astechrome (HAS), a tryptophan-derived iron(III)-complex that acts as a virulence factor in infected mice. Required for the production of HAS. This Aspergillus fumigatus (strain CBS 144.89 / FGSC A1163 / CEA10) (Neosartorya fumigata) protein is MFS-type transporter hasB.